We begin with the raw amino-acid sequence, 321 residues long: uncharacterized protein (321 aa).

This is an uncharacterized protein from Aquifex aeolicus (strain VF5).